A 443-amino-acid chain; its full sequence is C4-dicarboxylate transport protein (443 aa).

10 helical membrane passes run 10–30, 46–66, 78–98, 130–150, 152–172, 199–219, 224–244, 291–311, 332–352, and 354–374; these read SLYFQVIVAIAIGILLGHFYP, LIKMVIAPIIFCTVVSGIAGM, YALLYFEIVSTIALLIGLIVV, SIVGFILNIIPATIVGAFANG, ILQVLMFSVVFGFALHRLGAY, PLGALGAMAFTIGAYGVGSLV, LMICFYITCVVFVLVVLGAIC, VVGLVIPTGYSFNLDGTSIYL, ITLLLVLLLSSKGAAGVTGSG, and IVLAATLSAVGHLPVAGLALI. The tract at residues 415–443 is disordered; the sequence is ELASGGRPITDTRETDDLGVAEGPAPSIK.

This sequence belongs to the dicarboxylate/amino acid:cation symporter (DAACS) (TC 2.A.23) family.

The protein resides in the cell inner membrane. Functionally, responsible for the transport of dicarboxylates such as succinate, fumarate, and malate from the periplasm across the membrane. This is C4-dicarboxylate transport protein from Pseudomonas fluorescens (strain ATCC BAA-477 / NRRL B-23932 / Pf-5).